The chain runs to 460 residues: A-type ATP synthase subunit B (460 aa).

It belongs to the ATPase alpha/beta chains family. As to quaternary structure, has multiple subunits with at least A(3), B(3), C, D, E, F, H, I and proteolipid K(x).

It is found in the cell membrane. Component of the A-type ATP synthase that produces ATP from ADP in the presence of a proton gradient across the membrane. The B chain is a regulatory subunit. The polypeptide is A-type ATP synthase subunit B (Thermofilum pendens (strain DSM 2475 / Hrk 5)).